Consider the following 102-residue polypeptide: Urease subunit beta (102 aa).

It belongs to the urease beta subunit family. Heterotrimer of UreA (gamma), UreB (beta) and UreC (alpha) subunits. Three heterotrimers associate to form the active enzyme.

The protein resides in the cytoplasm. The enzyme catalyses urea + 2 H2O + H(+) = hydrogencarbonate + 2 NH4(+). It functions in the pathway nitrogen metabolism; urea degradation; CO(2) and NH(3) from urea (urease route): step 1/1. The sequence is that of Urease subunit beta from Acinetobacter baumannii (strain ACICU).